We begin with the raw amino-acid sequence, 338 residues long: Phenylalanine--tRNA ligase alpha subunit (338 aa).

Residue E252 coordinates Mg(2+).

It belongs to the class-II aminoacyl-tRNA synthetase family. Phe-tRNA synthetase alpha subunit type 1 subfamily. As to quaternary structure, tetramer of two alpha and two beta subunits. Mg(2+) serves as cofactor.

It localises to the cytoplasm. The enzyme catalyses tRNA(Phe) + L-phenylalanine + ATP = L-phenylalanyl-tRNA(Phe) + AMP + diphosphate + H(+). In Pseudomonas putida (strain ATCC 700007 / DSM 6899 / JCM 31910 / BCRC 17059 / LMG 24140 / F1), this protein is Phenylalanine--tRNA ligase alpha subunit.